The chain runs to 154 residues: Ribosome maturation factor RimP (154 aa).

It belongs to the RimP family.

It is found in the cytoplasm. Functionally, required for maturation of 30S ribosomal subunits. The chain is Ribosome maturation factor RimP from Salmonella agona (strain SL483).